The following is a 252-amino-acid chain: Probable transcriptional regulatory protein Tmel_0985 (252 aa).

The protein belongs to the TACO1 family.

It is found in the cytoplasm. This Thermosipho melanesiensis (strain DSM 12029 / CIP 104789 / BI429) protein is Probable transcriptional regulatory protein Tmel_0985.